The following is a 405-amino-acid chain: uncharacterized protein (405 aa).

12 helical membrane passes run 19-39 (IVSI…PLAV), 47-67 (VMGF…FATL), 85-105 (IVVF…TAGL), 107-127 (ASLP…LGIG), 156-176 (GIVT…FYHW), 178-198 (GLQA…LLAI), 224-244 (GMAL…ITLF), 252-272 (GAAF…LLFP), 283-303 (VAMI…VATM), 309-329 (IGVL…GVVA), 344-364 (TYTV…GLVM), and 366-386 (WAGV…ALLL).

It belongs to the major facilitator superfamily. YhhS family.

The protein localises to the cell inner membrane. This is an uncharacterized protein from Shigella flexneri.